The chain runs to 379 residues: Protein hairy (379 aa).

A disordered region spans residues Ser-20–Arg-50. A compositionally biased stretch (basic and acidic residues) spans Gln-29–Glu-47. The segment at Lys-36 to Asn-55 is interaction with Topors. A bHLH domain is found at Asp-38 to Leu-95. The Orange domain maps to Phe-114 to Leu-143. Disordered stretches follow at residues Gln-167–Ala-208 and Gln-298–Ser-345. 2 stretches are compositionally biased toward low complexity: residues Pro-182–Thr-207 and Ala-301–Ala-328. The short motif at Trp-376 to Trp-379 is the WRPW motif element.

As to quaternary structure, transcription repression requires formation of a complex with a corepressor protein (Groucho).

Its subcellular location is the nucleus. Its function is as follows. Pair-rule protein that regulates embryonic segmentation and adult bristle patterning. Transcriptional repressor of genes that require a bHLH protein for their transcription (e.g. ftz). This is Protein hairy from Drosophila virilis (Fruit fly).